Consider the following 156-residue polypeptide: UPF0266 membrane protein NT01EI_1718 (156 aa).

3 helical membrane-spanning segments follow: residues 6-26 (IALL…EAIM), 46-63 (DSLI…RNIS), and 67-87 (APFT…IFYL).

Belongs to the UPF0266 family.

It is found in the cell inner membrane. This Edwardsiella ictaluri (strain 93-146) protein is UPF0266 membrane protein NT01EI_1718.